The primary structure comprises 327 residues: Ribosomal RNA small subunit methyltransferase H (327 aa).

S-adenosyl-L-methionine contacts are provided by residues Gly41 to His43, Asp60, Tyr87, Asp108, and Gln115. The tract at residues Ala292–Arg327 is disordered.

Belongs to the methyltransferase superfamily. RsmH family.

The protein localises to the cytoplasm. The catalysed reaction is cytidine(1402) in 16S rRNA + S-adenosyl-L-methionine = N(4)-methylcytidine(1402) in 16S rRNA + S-adenosyl-L-homocysteine + H(+). In terms of biological role, specifically methylates the N4 position of cytidine in position 1402 (C1402) of 16S rRNA. The polypeptide is Ribosomal RNA small subunit methyltransferase H (Kocuria rhizophila (strain ATCC 9341 / DSM 348 / NBRC 103217 / DC2201)).